We begin with the raw amino-acid sequence, 128 residues long: Probable 4-amino-4-deoxy-L-arabinose-phosphoundecaprenol flippase subunit ArnF (128 aa).

At 1-2 (MG) the chain is on the cytoplasmic side. A helical transmembrane segment spans residues 3–23 (LMWGLFSVIIASVAQLSLGFA). Residues 24 to 35 (ASHLPPMTHLWD) are Periplasmic-facing. Residues 36–56 (FIATLLAFGLDARILLLGLLG) form a helical membrane-spanning segment. Residues 57 to 77 (YLLSVFCWYKTLHKLALSKAY) lie on the Cytoplasmic side of the membrane. The helical transmembrane segment at 78-98 (ALLSMSYVLVWIASMVLPGWG) threads the bilayer. The Periplasmic segment spans residues 99–100 (GT). A helical membrane pass occupies residues 101–121 (FSLKALLGVACIMSGLMLIFL). The Cytoplasmic portion of the chain corresponds to 122 to 128 (PTTKQRY).

This sequence belongs to the ArnF family. As to quaternary structure, heterodimer of ArnE and ArnF.

It localises to the cell inner membrane. It participates in bacterial outer membrane biogenesis; lipopolysaccharide biosynthesis. In terms of biological role, translocates 4-amino-4-deoxy-L-arabinose-phosphoundecaprenol (alpha-L-Ara4N-phosphoundecaprenol) from the cytoplasmic to the periplasmic side of the inner membrane. This Shigella dysenteriae serotype 1 (strain Sd197) protein is Probable 4-amino-4-deoxy-L-arabinose-phosphoundecaprenol flippase subunit ArnF.